Reading from the N-terminus, the 203-residue chain is MADEADMRNELTDMQARADQLGDESLESTRRMLQLVEESKDAGIRTLVMLDEQGEQLERIEEGMDQINKDMKEAEKNLTDLGNLCGLCPCPCNKLKGGGQSWGNNQDGVVSSQPARVVDEREQMAISGGFIRRVTNDARENEMDENLEQVGSIIGNLRHMALDMGNEIDTQNRQIDRIMDMADSNKTRIDEANQRATKMLGSG.

Over residues 1–11 the composition is skewed to basic and acidic residues; that stretch reads MADEADMRNEL. Positions 1–25 are disordered; sequence MADEADMRNELTDMQARADQLGDES. 2 t-SNARE coiled-coil homology domains span residues 19–81 and 137–199; these read DQLG…LTDL and DARE…ATKM.

The protein belongs to the SNAP-25 family.

The protein resides in the synapse. Its subcellular location is the synaptosome. The protein localises to the cell membrane. Its function is as follows. May play an important role in the synaptic function of specific neuronal systems. Associates with proteins involved in vesicle docking and membrane fusion. The chain is Synaptosomal-associated protein 25-B (snap25b) from Carassius auratus (Goldfish).